Reading from the N-terminus, the 641-residue chain is Histone-lysine N-methyltransferase set9 (641 aa).

One can recognise an SET domain in the interval 120–234 (CPFEVTTTNR…IGEEITVSYG (115 aa)). Disordered stretches follow at residues 261–388 (NLAP…STAA) and 596–628 (GVSF…NTRV). The span at 348–359 (AGDSGKSSSAGD) shows a compositional bias: low complexity. The span at 361–381 (VESSGTDSESLTSITPQESQR) shows a compositional bias: polar residues. Residues 608–625 (SDMRSETPDSEALDERGN) are compositionally biased toward basic and acidic residues.

The protein belongs to the class V-like SAM-binding methyltransferase superfamily. Histone-lysine methyltransferase family. Suvar4-20 subfamily.

The protein resides in the nucleus. It localises to the chromosome. It carries out the reaction L-lysyl(20)-[histone H4] + 3 S-adenosyl-L-methionine = N(6),N(6),N(6)-trimethyl-L-lysyl(20)-[histone H4] + 3 S-adenosyl-L-homocysteine + 3 H(+). Its function is as follows. Histone methyltransferase that trimethylates 'Lys-20' of histone H4 to form H4K20me3. This Emericella nidulans (strain FGSC A4 / ATCC 38163 / CBS 112.46 / NRRL 194 / M139) (Aspergillus nidulans) protein is Histone-lysine N-methyltransferase set9 (set9).